A 313-amino-acid chain; its full sequence is Ribosomal RNA small subunit methyltransferase H (313 aa).

S-adenosyl-L-methionine-binding positions include 35-37, Asp55, Phe79, Asp101, and Gln108; that span reads GGH.

This sequence belongs to the methyltransferase superfamily. RsmH family.

The protein localises to the cytoplasm. It catalyses the reaction cytidine(1402) in 16S rRNA + S-adenosyl-L-methionine = N(4)-methylcytidine(1402) in 16S rRNA + S-adenosyl-L-homocysteine + H(+). Specifically methylates the N4 position of cytidine in position 1402 (C1402) of 16S rRNA. The polypeptide is Ribosomal RNA small subunit methyltransferase H (Escherichia coli O127:H6 (strain E2348/69 / EPEC)).